The primary structure comprises 283 residues: Pantothenate synthetase (283 aa).

Methionine 30–histidine 37 lines the ATP pocket. Histidine 37 acts as the Proton donor in catalysis. A (R)-pantoate-binding site is contributed by glutamine 61. Glutamine 61 contributes to the beta-alanine binding site. ATP is bound at residue glycine 147–aspartate 150. Residue glutamine 153 coordinates (R)-pantoate. Residues isoleucine 176 and methionine 184–arginine 187 each bind ATP.

Belongs to the pantothenate synthetase family. In terms of assembly, homodimer.

Its subcellular location is the cytoplasm. The catalysed reaction is (R)-pantoate + beta-alanine + ATP = (R)-pantothenate + AMP + diphosphate + H(+). The protein operates within cofactor biosynthesis; (R)-pantothenate biosynthesis; (R)-pantothenate from (R)-pantoate and beta-alanine: step 1/1. Functionally, catalyzes the condensation of pantoate with beta-alanine in an ATP-dependent reaction via a pantoyl-adenylate intermediate. This Geobacter sulfurreducens (strain ATCC 51573 / DSM 12127 / PCA) protein is Pantothenate synthetase.